A 901-amino-acid polypeptide reads, in one-letter code: Alpha-actinin-3 (901 aa).

Methionine 1 bears the N-acetylmethionine mark. The segment at 1 to 261 (MMMVLQPEGL…IMTYVSCFYH (261 aa)) is actin-binding. Calponin-homology (CH) domains are found at residues 45-149 (KQQR…LRFA) and 158-264 (TSAK…HAFA). Spectrin repeat units follow at residues 288–398 (KLME…WLLS), 408–513 (HLAE…ALER), 523–634 (QLQL…MLQE), and 644–747 (RLRR…EVEN). 2 consecutive EF-hand domains span residues 760-795 (EQLN…MGYD) and 796-831 (LGEV…ETAE). The Ca(2+) site is built by aspartate 773, asparagine 777, methionine 779, aspartate 784, aspartate 809, and asparagine 811.

This sequence belongs to the alpha-actinin family. In terms of assembly, homodimer; antiparallel. Also forms heterodimers with ACTN2. Interacts with MYOZ1.

F-actin cross-linking protein which is thought to anchor actin to a variety of intracellular structures. This is a bundling protein. The chain is Alpha-actinin-3 (ACTN3) from Bos taurus (Bovine).